A 478-amino-acid chain; its full sequence is H(+)/Cl(-) exchange transporter ClcA (478 aa).

Topologically, residues 1–32 (MTHSTQQLSPEGVAEGKRGRLIRELVNRDKTP) are cytoplasmic. The chain crosses the membrane as a helical span at residues 33-69 (LIILIMAAVVGVVTGLLGVAFDRGVDWVQQQRLLALA). Residues 70-76 (NVADSAL) lie on the Periplasmic side of the membrane. Residues 77 to 100 (LVWPLAFIMSALLAMMGYFLVSRF) form a helical membrane-spanning segment. Positions 106 to 110 (GSGIP) match the Selectivity filter part_1 motif. Ser-107 lines the chloride pocket. The helical intramembrane region spans 109–116 (IPEIEGAM). The Cytoplasmic portion of the chain corresponds to 117-123 (EEMRPVR). 2 helical membrane passes run 124–141 (WWRVIPVKFIGGLGTLGA) and 148–166 (EGPMVQMGGNSGRMIVDIF). Residues 146–150 (GREGP) carry the Selectivity filter part_2 motif. The Cytoplasmic portion of the chain corresponds to 167–176 (RLRSPEARHS). 2 consecutive intramembrane regions (helical) follow at residues 177–189 (LLATGAAAGLSAA) and 193–201 (PLAGILFVI). Residues 202–214 (EEMRSQFRYSLVS) are Cytoplasmic-facing. Residues 215 to 232 (IKAVFIGVITSTIVYRYF) form a helical membrane-spanning segment. The Periplasmic segment spans residues 233-252 (NGERAIIEVGKLSDAPLNTL). The chain crosses the membrane as a helical span at residues 253-281 (WLYLLLGIIFGAVGVIFNALIFRTQDMFV). Residues 282–287 (RFHGGD) lie on the Cytoplasmic side of the membrane. Residues 288-309 (WRKLVLIGGLLGGMCGLLALLH) traverse the membrane as a helical segment. Topologically, residues 310 to 329 (GNAVGGGFALIPIAAAGNFS) are periplasmic. A run of 2 helical transmembrane segments spans residues 330–349 (IGMLLFIFIARVITTLLCFG) and 355–376 (GIFAPMLALGTILGTAFGLSCA). Positions 355–359 (GIFAP) match the Selectivity filter part_3 motif. The chloride site is built by Ile-356 and Phe-357. Topologically, residues 377–386 (HFFPQYGIEA) are periplasmic. Residues 387–401 (GTFAIAGMGALFAAS) constitute an intramembrane region (helical). The segment at residues 402–404 (VRA) is an intramembrane region (note=Loop between two helices). The helical intramembrane region spans 405 to 416 (PLTGIVLVLEMT). An intramembrane region (note=Loop between two helices) is located at residues 417–421 (DNYQL). The chain crosses the membrane as a helical span at residues 422 to 438 (ILPMIVTCLGATLIAQF). Topologically, residues 439–478 (MGGKPLYSAILARTLAKQEQARATVIAQEPAVENTPQTGR) are cytoplasmic. Residue Tyr-445 coordinates chloride.

The protein belongs to the chloride channel (TC 2.A.49) family. ClcA subfamily. In terms of assembly, homodimer.

It is found in the cell inner membrane. The catalysed reaction is 2 chloride(in) + H(+)(out) = 2 chloride(out) + H(+)(in). Proton-coupled chloride transporter. Functions as antiport system and exchanges two chloride ions for 1 proton. Probably acts as an electrical shunt for an outwardly-directed proton pump that is linked to amino acid decarboxylation, as part of the extreme acid resistance (XAR) response. The sequence is that of H(+)/Cl(-) exchange transporter ClcA from Yersinia pseudotuberculosis serotype IB (strain PB1/+).